A 29-amino-acid polypeptide reads, in one-letter code: Cyclotide mden-B (29 aa).

Residues 1-29 (GLPICGETCFTGKCYTPGCTCSYPICKKN) constitute a cross-link (cyclopeptide (Gly-Asn)). 3 disulfide bridges follow: Cys5-Cys19, Cys9-Cys21, and Cys14-Cys26.

Belongs to the cyclotide family. Moebius subfamily. In terms of processing, this is a cyclic peptide.

Its function is as follows. Probably participates in a plant defense mechanism. In Melicytus dentatus (Tree violet), this protein is Cyclotide mden-B.